The chain runs to 3114 residues: Centromere protein F (3114 aa).

The tract at residues 1-481 (MSWALEEWKE…IKENELRRSM (481 aa)) is interaction with SNAP25 and required for localization to the cytoplasm. Residues 13–131 (PTRALQKIQE…KSELERSQQA (119 aa)) adopt a coiled-coil conformation. The residue at position 106 (S106) is a Phosphoserine. A phosphothreonine mark is found at T144, T151, and T154. At Y158 the chain carries Phosphotyrosine. A compositionally biased stretch (polar residues) spans 211–235 (QASSSVFSWQQEKTPSHLSSNSQRT). The disordered stretch occupies residues 211–236 (QASSSVFSWQQEKTPSHLSSNSQRTP). Residues S242 and S276 each carry the phosphoserine modification. The stretch at 280 to 685 (LDQLKAQNQE…SVEIRNLHNV (406 aa)) forms a coiled coil. S773, S783, S821, S834, S838, and S876 each carry phosphoserine. Coiled-coil stretches lie at residues 899–989 (VAET…LNQE) and 1196–1244 (LEVK…IRGD). Phosphoserine occurs at positions 1248, 1255, and 1259. The stretch at 1549–1646 (VEELESLCEV…ELEVARLQLQ (98 aa)) forms a coiled coil. Residues S1651, S1652, and S1654 each carry the phosphoserine modification. Disordered regions lie at residues 1667–1690 (RNES…KHDV) and 1710–1746 (TETG…SECI). Positions 1669–1690 (ESCDISKEHTSETTERTPKHDV) are enriched in basic and acidic residues. S1726 is subject to Phosphoserine. T1862 is modified (phosphothreonine). Residues S1868 and S1892 each carry the phosphoserine modification. Coiled coils occupy residues 1890–2078 (NDSW…LQAR) and 2107–2891 (LSST…LCSQ). Residues 2026 to 2351 (LLKDKTHLQE…ERELEIARTN (326 aa)) are interaction with NDE1 and NDEL1. A run of 2 repeats spans residues 2111 to 2290 (QEEV…QSLD) and 2293 to 2472 (IEEE…QNLS). Residues 2111-2472 (QEEVHQLRRG…ACKAKEQNLS (362 aa)) are 2 X 177 AA tandem repeats. The segment at 2392–2829 (SEKENLTNEL…QAAQEKQKTG (438 aa)) is sufficient for self-association. Residues 2392-3017 (SEKENLTNEL…ATRTSPRLAA (626 aa)) are sufficient for centromere localization. S2416 and S2417 each carry phosphoserine. K2779 carries the post-translational modification N6-acetyllysine. Positions 2831–3017 (VMDTKVDELT…ATRTSPRLAA (187 aa)) are sufficient for nuclear localization. The tract at residues 2891-2977 (QQSKQDSRGS…AEDTEGTEFE (87 aa)) is disordered. Phosphoserine occurs at positions 2900, 2911, 2922, and 2936. Positions 2919–2936 (KRLSSGQNKASGKRQRSS) match the Nuclear localization signal motif. T2949 bears the Phosphothreonine mark. Phosphoserine is present on residues S2952, S2998, S3023, and S3026. The tract at residues 3024–3114 (PLSLGKENLA…SNGSENCKVQ (91 aa)) is disordered. The span at 3033–3045 (AESSKPTAGGSRS) shows a compositional bias: polar residues. Phosphoserine occurs at positions 3054, 3079, and 3083. A compositionally biased stretch (basic and acidic residues) spans 3079–3089 (SPTDSPREGLR). The segment covering 3105–3114 (SNGSENCKVQ) has biased composition (polar residues). Position 3111 is a cysteine methyl ester (C3111). C3111 is lipidated: S-farnesyl cysteine. A propeptide spans 3112–3114 (KVQ) (removed in mature form).

It belongs to the centromere protein F family. In terms of assembly, interacts with and STX4 (via C-terminus). Interacts (via N-terminus) with RBL1, RBL2 and SNAP25. Self-associates. Interacts with CENP-E and BUBR1 (via C-terminus). Interacts (via C-terminus) with NDE1, NDEL1 and RB1. In terms of processing, hyperphosphorylated during mitosis.

It is found in the cytoplasm. The protein resides in the perinuclear region. It localises to the nucleus matrix. Its subcellular location is the chromosome. The protein localises to the centromere. It is found in the kinetochore. The protein resides in the cytoskeleton. It localises to the spindle. In terms of biological role, required for kinetochore function and chromosome segregation in mitosis. Required for kinetochore localization of dynein, LIS1, NDE1 and NDEL1. Regulates recycling of the plasma membrane by acting as a link between recycling vesicles and the microtubule network though its association with STX4 and SNAP25. Acts as a potential inhibitor of pocket protein-mediated cellular processes during development by regulating the activity of RB proteins during cell division and proliferation. May play a regulatory or permissive role in the normal embryonic cardiomyocyte cell cycle and in promoting continued mitosis in transformed, abnormally dividing neonatal cardiomyocytes. Interaction with RB directs embryonic stem cells toward a cardiac lineage. Involved in the regulation of DNA synthesis and hence cell cycle progression, via its C-terminus. Has a potential role regulating skeletal myogenesis and in cell differentiation in embryogenesis. Involved in dendritic cell regulation of T-cell immunity against chlamydia. This chain is Centromere protein F (CENPF), found in Homo sapiens (Human).